A 446-amino-acid chain; its full sequence is Exodeoxyribonuclease 7 large subunit (446 aa).

The protein belongs to the XseA family. As to quaternary structure, heterooligomer composed of large and small subunits.

Its subcellular location is the cytoplasm. It catalyses the reaction Exonucleolytic cleavage in either 5'- to 3'- or 3'- to 5'-direction to yield nucleoside 5'-phosphates.. Bidirectionally degrades single-stranded DNA into large acid-insoluble oligonucleotides, which are then degraded further into small acid-soluble oligonucleotides. The sequence is that of Exodeoxyribonuclease 7 large subunit from Acholeplasma laidlawii (strain PG-8A).